The sequence spans 431 residues: Polygalacturonase ADPG1 (431 aa).

The signal sequence occupies residues M1–A23. 2 PbH1 repeats span residues C223–N249 and T250–D271. Catalysis depends on D264, which acts as the Proton donor. H287 is a catalytic residue. 3 PbH1 repeats span residues V303 to T324, A332 to Q353, and C398 to V420.

The protein belongs to the glycosyl hydrolase 28 family. Expressed in flower buds and siliques, in the dehiscence zone of anthers (stomium cells) and maturing siliques. Expressed in stigma during pollen tube growth. Not expressed in seeds or in the floral part or leaf abscission zone but found at the junction between the seed and the funiculus at the site of seed abscission.

Its subcellular location is the secreted. The protein resides in the cell wall. It is found in the cytoplasm. It catalyses the reaction (1,4-alpha-D-galacturonosyl)n+m + H2O = (1,4-alpha-D-galacturonosyl)n + (1,4-alpha-D-galacturonosyl)m.. Functionally, polygalacturonase involved in cell separation in the final stages of pod shatter and in anther dehiscence. Not involved in floral organ abscission. This is Polygalacturonase ADPG1 (ADPG1) from Arabidopsis thaliana (Mouse-ear cress).